Consider the following 413-residue polypeptide: MSRNLIVGLDVGTSKICTVVAEVNLNDQLEIVGIGTSISRGVRKGVLINIEAALDSISNSIEAAELISGCDITSLSVSMSGSSVEGTNSRGVVAINSKTREINEEDVERVIEAAKAIVIPMDREILHVIPQEFIVDGIPHIKNPIDMMGIRLEGEVHIITGSSSSSQNLVRCVNRAGFAVDEVVLGSLASSYATLSKEEREMGVLFIDMGKGTTDIILYIDGSPYYTGVIPIGVNRVTLDIAQVWKVPEDVAENIKITAGIAHPSILESQMETVIIPNLGTRPPQEKSRKELSVIINSRLREIFEMMKAEILKRGLYNKINGGIVLTGGGALFPGISNLIEEVFNYPARIGLPMSINGIGEEHIDPKFSSALGLVLYKHEQQKFNKLKKVSSKVKRKNKISSKLKGWFLKEWF.

It belongs to the FtsA/MreB family. Self-interacts. Interacts with FtsZ.

Its subcellular location is the cell inner membrane. Cell division protein that is involved in the assembly of the Z ring. May serve as a membrane anchor for the Z ring. The protein is Cell division protein FtsA of Borreliella burgdorferi (strain ATCC 35210 / DSM 4680 / CIP 102532 / B31) (Borrelia burgdorferi).